A 217-amino-acid chain; its full sequence is Uracil-DNA glycosylase (217 aa).

Asp62 serves as the catalytic Proton acceptor.

Belongs to the uracil-DNA glycosylase (UDG) superfamily. UNG family.

It localises to the cytoplasm. It catalyses the reaction Hydrolyzes single-stranded DNA or mismatched double-stranded DNA and polynucleotides, releasing free uracil.. In terms of biological role, excises uracil residues from the DNA which can arise as a result of misincorporation of dUMP residues by DNA polymerase or due to deamination of cytosine. This is Uracil-DNA glycosylase from Streptococcus pneumoniae (strain JJA).